Reading from the N-terminus, the 344-residue chain is tRNA N6-adenosine threonylcarbamoyltransferase (344 aa).

The Fe cation site is built by histidine 119 and histidine 123. Substrate is bound by residues 141–145 (VVSGG), aspartate 174, glycine 187, aspartate 191, and asparagine 280. Aspartate 310 contributes to the Fe cation binding site.

The protein belongs to the KAE1 / TsaD family. The cofactor is Fe(2+).

Its subcellular location is the cytoplasm. It carries out the reaction L-threonylcarbamoyladenylate + adenosine(37) in tRNA = N(6)-L-threonylcarbamoyladenosine(37) in tRNA + AMP + H(+). In terms of biological role, required for the formation of a threonylcarbamoyl group on adenosine at position 37 (t(6)A37) in tRNAs that read codons beginning with adenine. Is involved in the transfer of the threonylcarbamoyl moiety of threonylcarbamoyl-AMP (TC-AMP) to the N6 group of A37, together with TsaE and TsaB. TsaD likely plays a direct catalytic role in this reaction. In Listeria monocytogenes serotype 4b (strain CLIP80459), this protein is tRNA N6-adenosine threonylcarbamoyltransferase.